We begin with the raw amino-acid sequence, 86 residues long: MKPDIHPVYRTVVFHDTSANEYVKVGSTIKTEREIELDGVTYPYVTIDVSSKSHPFYTGRQKTFDSESSAARFQKRFGHFIGAKRG.

This sequence belongs to the bacterial ribosomal protein bL31 family. Type B subfamily. In terms of assembly, part of the 50S ribosomal subunit.

This chain is Large ribosomal subunit protein bL31B, found in Salmonella agona (strain SL483).